The sequence spans 234 residues: Sugar fermentation stimulation protein homolog (234 aa).

This sequence belongs to the SfsA family.

The protein is Sugar fermentation stimulation protein homolog of Pectobacterium carotovorum subsp. carotovorum (strain PC1).